The sequence spans 416 residues: Serine hydroxymethyltransferase (416 aa).

Residues Leu118 and 122–124 contribute to the (6S)-5,6,7,8-tetrahydrofolate site; that span reads GHL. Lys226 carries the post-translational modification N6-(pyridoxal phosphate)lysine. Residues Glu242 and 350–352 contribute to the (6S)-5,6,7,8-tetrahydrofolate site; that span reads SPF.

The protein belongs to the SHMT family. As to quaternary structure, homodimer. The cofactor is pyridoxal 5'-phosphate.

Its subcellular location is the cytoplasm. It catalyses the reaction (6R)-5,10-methylene-5,6,7,8-tetrahydrofolate + glycine + H2O = (6S)-5,6,7,8-tetrahydrofolate + L-serine. The protein operates within one-carbon metabolism; tetrahydrofolate interconversion. It participates in amino-acid biosynthesis; glycine biosynthesis; glycine from L-serine: step 1/1. Functionally, catalyzes the reversible interconversion of serine and glycine with tetrahydrofolate (THF) serving as the one-carbon carrier. This reaction serves as the major source of one-carbon groups required for the biosynthesis of purines, thymidylate, methionine, and other important biomolecules. Also exhibits THF-independent aldolase activity toward beta-hydroxyamino acids, producing glycine and aldehydes, via a retro-aldol mechanism. This chain is Serine hydroxymethyltransferase, found in Helicobacter pylori (strain G27).